The following is a 458-amino-acid chain: DNA repair protein RadA (458 aa).

Residues 11–28 (CNDCGAEFSRWQGQCSAC) form a C4-type zinc finger. 100–107 (GHPGAGKS) contributes to the ATP binding site. Residues 256 to 260 (KNRFG) carry the RadA KNRFG motif motif. Residues 355-458 (DVFVNVVGGV…TDALAVLDNL (104 aa)) form a lon-protease-like region.

Belongs to the RecA family. RadA subfamily.

DNA-dependent ATPase involved in processing of recombination intermediates, plays a role in repairing DNA breaks. Stimulates the branch migration of RecA-mediated strand transfer reactions, allowing the 3' invading strand to extend heteroduplex DNA faster. Binds ssDNA in the presence of ADP but not other nucleotides, has ATPase activity that is stimulated by ssDNA and various branched DNA structures, but inhibited by SSB. Does not have RecA's homology-searching function. This chain is DNA repair protein RadA, found in Haemophilus influenzae (strain ATCC 51907 / DSM 11121 / KW20 / Rd).